The chain runs to 394 residues: V-type proton ATPase subunit C (394 aa).

The residue at position 17 (S17) is a Phosphoserine.

Belongs to the V-ATPase C subunit family. As to quaternary structure, V-ATPase is a heteromultimeric enzyme composed of a peripheral catalytic V1 complex (components A to H) attached to an integral membrane V0 proton pore complex (components: a, c, c', c'', d, e, f and VOA1).

It is found in the cytoplasm. The protein localises to the vacuole membrane. In terms of biological role, subunit of the V1 complex of vacuolar(H+)-ATPase (V-ATPase), a multisubunit enzyme composed of a peripheral complex (V1) that hydrolyzes ATP and a membrane integral complex (V0) that translocates protons. V-ATPase is responsible for acidifying and maintaining the pH of intracellular compartments. Subunit C is necessary for the assembly of the catalytic sector of the enzyme and is likely to have a specific function in its catalytic activity. Reversibly leaves the enzyme after glucose depletion, causing the catalytic subcomplex V1 to detach from the V0 section. This Schizosaccharomyces pombe (strain 972 / ATCC 24843) (Fission yeast) protein is V-type proton ATPase subunit C.